The primary structure comprises 644 residues: Threonine--tRNA ligase (644 aa).

Residues 1 to 62 (MSFSITLPDG…DSDSEVAIIT (62 aa)) form the TGS domain. Residues 240-538 (DHRTIGRDLD…LTEIYKGAFP (299 aa)) form a catalytic region. Zn(2+)-binding residues include C334, H385, and H515.

The protein belongs to the class-II aminoacyl-tRNA synthetase family. As to quaternary structure, homodimer. It depends on Zn(2+) as a cofactor.

The protein localises to the cytoplasm. The catalysed reaction is tRNA(Thr) + L-threonine + ATP = L-threonyl-tRNA(Thr) + AMP + diphosphate + H(+). Functionally, catalyzes the attachment of threonine to tRNA(Thr) in a two-step reaction: L-threonine is first activated by ATP to form Thr-AMP and then transferred to the acceptor end of tRNA(Thr). Also edits incorrectly charged L-seryl-tRNA(Thr). This is Threonine--tRNA ligase from Lactobacillus helveticus (strain DPC 4571).